Reading from the N-terminus, the 190-residue chain is Elongation factor P-like protein (190 aa).

This sequence belongs to the elongation factor P family.

The sequence is that of Elongation factor P-like protein from Citrobacter koseri (strain ATCC BAA-895 / CDC 4225-83 / SGSC4696).